Reading from the N-terminus, the 327-residue chain is 4-hydroxythreonine-4-phosphate dehydrogenase (327 aa).

Positions 134 and 135 each coordinate substrate. Residues H164, H209, and H264 each contribute to the a divalent metal cation site. Substrate-binding residues include K272, N281, and R290.

Belongs to the PdxA family. In terms of assembly, homodimer. Zn(2+) is required as a cofactor. Requires Mg(2+) as cofactor. It depends on Co(2+) as a cofactor.

Its subcellular location is the cytoplasm. The enzyme catalyses 4-(phosphooxy)-L-threonine + NAD(+) = 3-amino-2-oxopropyl phosphate + CO2 + NADH. It functions in the pathway cofactor biosynthesis; pyridoxine 5'-phosphate biosynthesis; pyridoxine 5'-phosphate from D-erythrose 4-phosphate: step 4/5. Catalyzes the NAD(P)-dependent oxidation of 4-(phosphooxy)-L-threonine (HTP) into 2-amino-3-oxo-4-(phosphooxy)butyric acid which spontaneously decarboxylates to form 3-amino-2-oxopropyl phosphate (AHAP). This chain is 4-hydroxythreonine-4-phosphate dehydrogenase, found in Shewanella frigidimarina (strain NCIMB 400).